The sequence spans 285 residues: Ribosomal RNA small subunit methyltransferase I (285 aa).

This sequence belongs to the methyltransferase superfamily. RsmI family.

It is found in the cytoplasm. The enzyme catalyses cytidine(1402) in 16S rRNA + S-adenosyl-L-methionine = 2'-O-methylcytidine(1402) in 16S rRNA + S-adenosyl-L-homocysteine + H(+). In terms of biological role, catalyzes the 2'-O-methylation of the ribose of cytidine 1402 (C1402) in 16S rRNA. The protein is Ribosomal RNA small subunit methyltransferase I of Mycobacterium tuberculosis (strain CDC 1551 / Oshkosh).